The primary structure comprises 295 residues: Tyrosine recombinase XerD (295 aa).

The Core-binding (CB) domain occupies 1–85 (METIIEEYLK…TIRSFHQFAL (85 aa)). The Tyr recombinase domain occupies 106–289 (KLPDVLDVEE…SKTQIRQMYN (184 aa)). Catalysis depends on residues R146, K170, H241, R244, and H267. The O-(3'-phospho-DNA)-tyrosine intermediate role is filled by Y276.

The protein belongs to the 'phage' integrase family. XerD subfamily. As to quaternary structure, forms a cyclic heterotetrameric complex composed of two molecules of XerC and two molecules of XerD.

Its subcellular location is the cytoplasm. In terms of biological role, site-specific tyrosine recombinase, which acts by catalyzing the cutting and rejoining of the recombining DNA molecules. The XerC-XerD complex is essential to convert dimers of the bacterial chromosome into monomers to permit their segregation at cell division. It also contributes to the segregational stability of plasmids. The polypeptide is Tyrosine recombinase XerD (Staphylococcus haemolyticus (strain JCSC1435)).